The following is a 1042-amino-acid chain: Protein phosphatase Slingshot homolog 1 (1042 aa).

Residues 1–12 (MALVTLQRSPTP) are compositionally biased toward polar residues. The tract at residues 1–29 (MALVTLQRSPTPSAASSSASNSELEAGSD) is disordered. At Ala-2 the chain carries N-acetylalanine. Over residues 13–22 (SAASSSASNS) the composition is skewed to low complexity. 2 positions are modified to phosphoserine: Ser-37 and Ser-57. The 56-residue stretch at 249–304 (ERTERLIKAKLRSIMMSQDLENVTSKEIRNELEKQMNCNLKEFKEFIDNEMLLILG) folds into the DEK-C domain. Residues 308 to 449 (KPSLIFDHLY…LSEYEGILDA (142 aa)) enclose the Tyrosine-protein phosphatase domain. The active-site Phosphocysteine intermediate is the Cys-393. Residue Ser-516 is modified to Phosphoserine. 4 disordered regions span residues 576-609 (FGNS…ASTQ), 668-766 (MERH…PHCD), 858-900 (IPEE…LDHT), and 915-942 (PTSS…KPGL). The span at 675 to 693 (SSSAICTQPTFLPHVTSSP) shows a compositional bias: polar residues. Residues 697–712 (ASSRSRAPERPASGPA) are compositionally biased toward low complexity. The span at 886-900 (LQKSPTSTLPRLDHT) shows a compositional bias: polar residues. Position 889 is a phosphoserine (Ser-889). Positions 889–1042 (SPTSTLPRLD…LKSPSRVNKS (154 aa)) are interaction with YWHAG. Residues 917 to 935 (SSSISSNLTRSSSSDSIHS) are compositionally biased toward low complexity. At Ser-970 the chain carries Phosphoserine. Residues 985 to 995 (SSEADTSTIAD) are compositionally biased toward polar residues. The disordered stretch occupies residues 985–1042 (SSEADTSTIADSQDAKCGLSSSFLPEPQSAPRDPAATSKSSGKSAPEHLKSPSRVNKS).

This sequence belongs to the protein-tyrosine phosphatase family. In terms of assembly, interacts with the 14-3-3 proteins YWHAB, YWHAG, YWHAQ, and YWHAZ. Interaction with 14-3-3 proteins inhibits phosphatase activity and also blocks recruitment to lamellipodia and stimulation by actin. Interacts with actin and this stimulates phosphatase activity. Interacts with LIMK1. Phosphorylated. Inhibitory phosphorylation by PAK4 promotes binding to YWHAZ. Phosphorylation at Ser-970 is decreased by stimuli which promote actin reorganization and lamellipodia formation. Can be dephosphorylated and activated by PPP3CA/calcineurin A. Phosphorylation decreases immediately prior to telophase. As to expression, expressed in brain, heart, kidney and thymus. Also expressed at lower levels in liver, skeletal muscle, small intestine and spleen.

Its subcellular location is the cytoplasm. It localises to the cytoskeleton. The protein resides in the cleavage furrow. It is found in the midbody. The catalysed reaction is O-phospho-L-tyrosyl-[protein] + H2O = L-tyrosyl-[protein] + phosphate. It catalyses the reaction O-phospho-L-seryl-[protein] + H2O = L-seryl-[protein] + phosphate. It carries out the reaction O-phospho-L-threonyl-[protein] + H2O = L-threonyl-[protein] + phosphate. Protein phosphatase which regulates actin filament dynamics. Dephosphorylates and activates the actin binding/depolymerizing factor cofilin, which subsequently binds to actin filaments and stimulates their disassembly. Inhibitory phosphorylation of cofilin is mediated by LIMK1, which may also be dephosphorylated and inactivated by this protein. The polypeptide is Protein phosphatase Slingshot homolog 1 (Mus musculus (Mouse)).